Consider the following 312-residue polypeptide: Carbonic anhydrase 4 (312 aa).

The signal sequence occupies residues 1-18 (MRLLLALLVLAAAPPQAR). An Alpha-carbonic anhydrase domain is found at 21 to 285 (SHWCYQIQVK…LGQRQVFRSG (265 aa)). 2 disulfide bridges follow: C24-C36 and C46-C229. An N-linked (GlcNAc...) asparagine glycan is attached at N33. H88 acts as the Proton donor/acceptor in catalysis. Positions 115, 117, and 140 each coordinate Zn(2+). N152 and N195 each carry an N-linked (GlcNAc...) asparagine glycan. Substrate is bound at residue 225–226 (TT). A glycan (N-linked (GlcNAc...) asparagine) is linked at N265. The GPI-anchor amidated serine moiety is linked to residue S284. Positions 285-312 (GAPGLLLAQPLPTLLAPVLACLTVGFLR) are cleaved as a propeptide — removed in mature form.

This sequence belongs to the alpha-carbonic anhydrase family. In terms of assembly, interacts with SLC4A4. The cofactor is Zn(2+).

Its subcellular location is the cell membrane. It catalyses the reaction hydrogencarbonate + H(+) = CO2 + H2O. With respect to regulation, inhibited by acetazolamide. Catalyzes the reversible hydration of carbon dioxide into bicarbonate and protons and thus is essential to maintaining intracellular and extracellular pH. May stimulate the sodium/bicarbonate transporter activity of SLC4A4 that acts in pH homeostasis. It is essential for acid overload removal from the retina and retina epithelium, and acid release in the choriocapillaris in the choroid. The polypeptide is Carbonic anhydrase 4 (CA4) (Bos taurus (Bovine)).